The primary structure comprises 832 residues: Mechanosensitive cation channel TMEM63B (832 aa).

The Extracellular portion of the chain corresponds to 1-40 (MLPFLLATLGTAALNSSNPKDYCYSARIRSTVLQGLPFGG). The chain crosses the membrane as a helical span at residues 41–65 (VPTVLALDFMCFLALLFLFSILRKV). Cysteine 51 carries S-palmitoyl cysteine lipidation. Residues 66–145 (AWDYGRLALV…KDDEIRDKCG (80 aa)) are Cytoplasmic-facing. A Mediates endoplasmic reticulum retention motif is present at residues 86–88 (RER). Residues serine 111, serine 113, serine 114, and serine 115 each carry the phosphoserine modification. Residue cysteine 126 is the site of S-palmitoyl cysteine attachment. A helical transmembrane segment spans residues 146 to 178 (GDAVHYLSFQRHIIGLLVVVGVLSVGIVLPVNF). Topologically, residues 179-202 (SGDLLENNAYSFGRTTIANLKSGN) are extracellular. A helical membrane pass occupies residues 203–227 (NLLWLHTSFAFLYLLLTVYSMRRHT). The Cytoplasmic portion of the chain corresponds to 228–427 (SKMRYKEDDL…IYWEHLSIRG (200 aa)). An intracellular linker IL2; confers mechanosensitivity region spans residues 231-426 (RYKEDDLVKR…NIYWEHLSIR (196 aa)). 2 S-palmitoyl cysteine lipidation sites follow: cysteine 382 and cysteine 398. A helical transmembrane segment spans residues 428 to 457 (FIWWLRCLVINVVLFILLFFLTTPAIIITT). Topologically, residues 458–472 (MDKFNVTKPVEYLNN) are extracellular. A glycan (N-linked (GlcNAc...) asparagine) is linked at asparagine 462. A helical membrane pass occupies residues 473–502 (PIITQFFPTLLLWCFSALLPTIVYYSAFFE). The Cytoplasmic segment spans residues 503-506 (AHWT). Residues 507–543 (RSGENRTTMHKCYTFLIFMVLLLPSLGLSSLDLFFRW) traverse the membrane as a helical segment. Residues 544–566 (LFDKKFLAEAAIRFECVFLPDNG) are Extracellular-facing. The helical transmembrane segment at 567–599 (AFFVNYVIASAFIGNAMDLLRIPGLLMYMIRLC) threads the bilayer. Positions 567–599 (AFFVNYVIASAFIGNAMDLLRIPGLLMYMIRLC) are gating helix. Over 600 to 619 (LARSAAERRNVKRHQAYEFQ) the chain is Cytoplasmic. Residues 620 to 638 (FGAAYAWMMCVFTVVMTYS) form a helical membrane-spanning segment. The Extracellular portion of the chain corresponds to 639–641 (ITC). A helical transmembrane segment spans residues 642 to 666 (PIIVPFGLMYMLLKHLVDRYNLYYA). Over 667-673 (YLPAKLD) the chain is Cytoplasmic. The helical transmembrane segment at 674-702 (KKIHSGAVNQVVAAPILCLFWLLFFSTMR) threads the bilayer. Topologically, residues 703 to 707 (TGFLA) are extracellular. Residues 708 to 728 (PTSMFTFVVLVITIVICLCHV) form a helical membrane-spanning segment. S-palmitoyl cysteine attachment occurs at residues cysteine 726 and cysteine 729. The Cytoplasmic segment spans residues 729 to 832 (CFGHFKYLSA…DSLIENEIHQ (104 aa)). Disordered regions lie at residues 748-767 (TDAV…AVPK) and 776-818 (LQDS…DTDF). The span at 749–758 (DAVSSRSNGR) shows a compositional bias: polar residues. Residues 789–801 (PGSSGDEPPSSSS) are compositionally biased toward low complexity.

The protein belongs to the CSC1 (TC 1.A.17) family. As to quaternary structure, monomer. Interacts with SLC19A2; interaction is required for the phospholipid scramblase activity. In terms of processing, palmitoylation is required for localization to the plasma membrane and stability. Expressed in cochlear hair cells (at protein level). Highly expressed in the subfornical organ of the brain. Expressed in small intestine. As to expression, brain-specific.

It is found in the cell membrane. The protein localises to the endoplasmic reticulum membrane. Its subcellular location is the lysosome membrane. It localises to the early endosome membrane. The enzyme catalyses Ca(2+)(in) = Ca(2+)(out). It catalyses the reaction Mg(2+)(in) = Mg(2+)(out). The catalysed reaction is K(+)(in) = K(+)(out). It carries out the reaction Na(+)(in) = Na(+)(out). The enzyme catalyses Cs(+)(in) = Cs(+)(out). It catalyses the reaction a 1,2-diacyl-sn-glycero-3-phosphocholine(in) = a 1,2-diacyl-sn-glycero-3-phosphocholine(out). The catalysed reaction is a sphingomyelin(in) = a sphingomyelin(out). Mechanosensitive cation channel with low conductance and high activation threshold. Osmosensitive cation channel preferentially activated by hypotonic stress. Also acts as a phospholipid scramblase in response to changes in membrane structure: upon changes in membrane curvature and thickness, alters its conformation and translocates phospholipids, such as phosphatidylcholine and sphingomyelin, thereby controlling plasma membrane lipid distribution. Forms a heterodimer with SLC19A2, which mediates phospholipid scramblase activity following Ca(2+) stimulation. Expressed in excitatory neurons of the subfornical organ and functions as a thirst receptor that mediates neuronal response to hyperosmolality to drive thirst and drinking behavior. Facilitates intestinal motility by promoting proliferation of intestinal stem cells. Essential for the baby's first breath and respiration throughout life. Upon lung inflation conducts cation currents in alveolar type 1 and 2 cells triggering lamellar body exocytosis and surfactant secretion into airspace. Acts as an osmosensor in cochlear outer hair cells (OHCs) where it mediates calcium influx and regulatory volume decrease response. Required for the maintenance of OHC morphology, OHC survival and normal hearing. Its function is as follows. Brain-specific osmosensitive calcium channel isoform. The chain is Mechanosensitive cation channel TMEM63B from Mus musculus (Mouse).